The primary structure comprises 161 residues: ATP synthase subunit b 1 (161 aa).

The chain crosses the membrane as a helical span at residues 1 to 21; that stretch reads MFATAEFWILACLVAFFAILG.

The protein belongs to the ATPase B chain family. F-type ATPases have 2 components, F(1) - the catalytic core - and F(0) - the membrane proton channel. F(1) has five subunits: alpha(3), beta(3), gamma(1), delta(1), epsilon(1). F(0) has three main subunits: a(1), b(2) and c(10-14). The alpha and beta chains form an alternating ring which encloses part of the gamma chain. F(1) is attached to F(0) by a central stalk formed by the gamma and epsilon chains, while a peripheral stalk is formed by the delta and b chains.

Its subcellular location is the cell inner membrane. Its function is as follows. F(1)F(0) ATP synthase produces ATP from ADP in the presence of a proton or sodium gradient. F-type ATPases consist of two structural domains, F(1) containing the extramembraneous catalytic core and F(0) containing the membrane proton channel, linked together by a central stalk and a peripheral stalk. During catalysis, ATP synthesis in the catalytic domain of F(1) is coupled via a rotary mechanism of the central stalk subunits to proton translocation. Functionally, component of the F(0) channel, it forms part of the peripheral stalk, linking F(1) to F(0). The chain is ATP synthase subunit b 1 from Parvibaculum lavamentivorans (strain DS-1 / DSM 13023 / NCIMB 13966).